The primary structure comprises 561 residues: Putative transport protein YbjL (561 aa).

Transmembrane regions (helical) follow at residues 8–28, 32–52, 66–86, 94–114, and 158–178; these read LLNGNYILLLFVVLALGLCLG, LGSIQLGNSIGVLVVSLLLGQ, FMLFIFCVGVEAGPNFFSIFF, MLALVMVGSALVIALGLGKLF, and NLSLGYALTYLIGLVSLIVGA. 2 RCK C-terminal domains span residues 200–288 and 292–373; these read RGLD…SFRN and VFDR…RIGF. 5 consecutive transmembrane segments (helical) span residues 383–403, 406–426, 451–471, 475–495, and 540–560; these read LLAFCAFFVIGLMIGMITFQF, FSFGMGNAAGLLFAGIMLGFM, VFMAGVGLSAGSGINNGLGAI, MLIAGLIVSLVPVVICFLFGA, and AIANVLLTLAGTIIVMVWPGL.

It belongs to the AAE transporter (TC 2.A.81) family. YbjL subfamily.

The protein localises to the cell membrane. This chain is Putative transport protein YbjL, found in Escherichia coli O127:H6 (strain E2348/69 / EPEC).